Reading from the N-terminus, the 525-residue chain is tRNA-splicing endonuclease subunit Sen54 (525 aa).

N-acetylmethionine is present on methionine 1. A disordered region spans residues 1 to 46; it reads MEPEPEPGSVEVPAGRVLSASELRAARSRSQKLPQRSHGPKDFLPD. Residues 7 to 23 show a composition bias toward low complexity; sequence PGSVEVPAGRVLSASEL. Position 178 is a phosphoserine (serine 178). Tyrosine 180 carries the phosphotyrosine modification. Residues 220-232 are compositionally biased toward low complexity; sequence LPPVSLAASSSPA. Residues 220-273 form a disordered region; that stretch reads LPPVSLAASSSPACDQSSQYPEEKSQDSSPRQGSELPLQFLGSSEPCSDLARED.

Belongs to the SEN54 family. TRNA splicing endonuclease is a heterotetramer composed of TSEN2, TSEN15, TSEN34/LENG5 and TSEN54. tRNA splicing endonuclease complex also contains proteins of the pre-mRNA 3'-end processing machinery such as CLP1, CPSF1, CPSF4 and CSTF2.

The protein resides in the nucleus. It is found in the nucleolus. Non-catalytic subunit of the tRNA-splicing endonuclease complex, a complex responsible for identification and cleavage of the splice sites in pre-tRNA. It cleaves pre-tRNA at the 5' and 3' splice sites to release the intron. The products are an intron and two tRNA half-molecules bearing 2',3' cyclic phosphate and 5'-OH termini. There are no conserved sequences at the splice sites, but the intron is invariably located at the same site in the gene, placing the splice sites an invariant distance from the constant structural features of the tRNA body. The tRNA splicing endonuclease is also involved in mRNA processing via its association with pre-mRNA 3'-end processing factors, establishing a link between pre-tRNA splicing and pre-mRNA 3'-end formation, suggesting that the endonuclease subunits function in multiple RNA-processing events. The chain is tRNA-splicing endonuclease subunit Sen54 (Tsen54) from Mus musculus (Mouse).